A 146-amino-acid polypeptide reads, in one-letter code: MLSATDLANRKFGSGDRIHVGGKAAARYGYDLSSSRSAHVAAADHLIGWFLAGFRQRIHKPFMLRTVQCDRIYVLAGPNLEAQWDVVAWTKLVHEPAYAVGLVSRWVLMTSHHMSCVVQGSRLGNRPRKCVMQRFSVAMRNIVRVG.

This is an uncharacterized protein from Sinorhizobium fredii (strain NBRC 101917 / NGR234).